We begin with the raw amino-acid sequence, 277 residues long: Tryptophan synthase alpha chain (277 aa).

Residues E51 and E62 each act as proton acceptor in the active site.

The protein belongs to the TrpA family. In terms of assembly, tetramer of two alpha and two beta chains.

It catalyses the reaction (1S,2R)-1-C-(indol-3-yl)glycerol 3-phosphate + L-serine = D-glyceraldehyde 3-phosphate + L-tryptophan + H2O. Its pathway is amino-acid biosynthesis; L-tryptophan biosynthesis; L-tryptophan from chorismate: step 5/5. Functionally, the alpha subunit is responsible for the aldol cleavage of indoleglycerol phosphate to indole and glyceraldehyde 3-phosphate. This Phenylobacterium zucineum (strain HLK1) protein is Tryptophan synthase alpha chain.